We begin with the raw amino-acid sequence, 383 residues long: Succinyl-diaminopimelate desuccinylase (383 aa).

Histidine 73 lines the Zn(2+) pocket. Aspartate 75 is a catalytic residue. Aspartate 107 serves as a coordination point for Zn(2+). Residue glutamate 141 is the Proton acceptor of the active site. Zn(2+)-binding residues include glutamate 142, glutamate 170, and histidine 356.

This sequence belongs to the peptidase M20A family. DapE subfamily. In terms of assembly, homodimer. The cofactor is Zn(2+). Co(2+) serves as cofactor.

The catalysed reaction is N-succinyl-(2S,6S)-2,6-diaminopimelate + H2O = (2S,6S)-2,6-diaminopimelate + succinate. The protein operates within amino-acid biosynthesis; L-lysine biosynthesis via DAP pathway; LL-2,6-diaminopimelate from (S)-tetrahydrodipicolinate (succinylase route): step 3/3. In terms of biological role, catalyzes the hydrolysis of N-succinyl-L,L-diaminopimelic acid (SDAP), forming succinate and LL-2,6-diaminopimelate (DAP), an intermediate involved in the bacterial biosynthesis of lysine and meso-diaminopimelic acid, an essential component of bacterial cell walls. The polypeptide is Succinyl-diaminopimelate desuccinylase (Pseudomonas putida (strain W619)).